Here is a 142-residue protein sequence, read N- to C-terminus: ATP synthase epsilon chain (142 aa).

It belongs to the ATPase epsilon chain family. F-type ATPases have 2 components, CF(1) - the catalytic core - and CF(0) - the membrane proton channel. CF(1) has five subunits: alpha(3), beta(3), gamma(1), delta(1), epsilon(1). CF(0) has three main subunits: a, b and c.

The protein localises to the cell inner membrane. In terms of biological role, produces ATP from ADP in the presence of a proton gradient across the membrane. The protein is ATP synthase epsilon chain of Shewanella baltica (strain OS185).